Consider the following 126-residue polypeptide: uncharacterized protein (126 aa).

A signal peptide spans 1–27; it reads MKNLFIFLSLMMMFVLTACGGSKYDDA. Residues 93–126 are disordered; it reads MTDMPGNGENDRLGLSKKTPDYEEVKGEETELEE. Residues 101-126 show a composition bias toward basic and acidic residues; sequence ENDRLGLSKKTPDYEEVKGEETELEE.

This is an uncharacterized protein from Bacillus subtilis (strain 168).